A 421-amino-acid chain; its full sequence is Immunoglobulin heavy constant epsilon (421 aa).

4 Ig-like domains span residues proline 5–threonine 97, proline 99–serine 184, proline 201–threonine 301, and proline 310–serine 410. Cysteine 23 and cysteine 75 are oxidised to a cystine. N-linked (GlcNAc...) asparagine glycosylation is found at asparagine 43, asparagine 72, asparagine 84, asparagine 95, asparagine 166, asparagine 238, asparagine 261, asparagine 365, and asparagine 415. Intrachain disulfides connect cysteine 121/cysteine 180, cysteine 226/cysteine 285, and cysteine 330/cysteine 392.

As to quaternary structure, the basic structural unit consists of two identical heavy chains and two identical light chains; disulfide-linked. N-terminal variable regions of the heavy and light chains form the antigen binding sites, whereas the C-terminal constant regions of the heavy chains interact with immune receptors to mediate effector functions.

Its subcellular location is the secreted. It localises to the cell membrane. In terms of biological role, constant region of immunoglobulin heavy chains. Immunoglobulins, also known as antibodies, are membrane-bound or secreted glycoproteins produced by B lymphocytes. In the recognition phase of humoral immunity, the membrane-bound immunoglobulins serve as receptors which, upon binding of a specific antigen, trigger the clonal expansion and differentiation of B lymphocytes into immunoglobulins-secreting plasma cells. Secreted immunoglobulins mediate the effector phase of humoral immunity, which results in the elimination of bound antigens. The antigen binding site is formed by the variable domain of one heavy chain, together with that of its associated light chain. Thus, each immunoglobulin has two antigen binding sites with remarkable affinity for a particular antigen. The variable domains are assembled by a process called V-(D)-J rearrangement and can then be subjected to somatic hypermutations which, after exposure to antigen and selection, allow affinity maturation for a particular antigen. This is Immunoglobulin heavy constant epsilon from Mus musculus (Mouse).